The primary structure comprises 109 residues: MGSLIIEDLQEGFGKEAVKGKEITVHYTGWLENGTKFDSSLDRRQPLTITLGVGQVIKGWDEGFGGMKEGGKRKLTIPSEMGYGARGAGGVIPPHATLIFEVELLKVYE.

One can recognise a PPIase FKBP-type domain in the interval 20–108; sequence GKEITVHYTG…IFEVELLKVY (89 aa).

Belongs to the FKBP-type PPIase family.

The catalysed reaction is [protein]-peptidylproline (omega=180) = [protein]-peptidylproline (omega=0). With respect to regulation, inhibited by FK506. PPIases accelerate the folding of proteins. In Neisseria meningitidis serogroup A / serotype 4A (strain DSM 15465 / Z2491), this protein is FK506-binding protein (fbp).